Here is a 474-residue protein sequence, read N- to C-terminus: Citrate synthase 4, mitochondrial (474 aa).

The N-terminal 16 residues, 1–16, are a transit peptide targeting the mitochondrion; the sequence is MVFFRSVSAFTRLRSR. Active-site residues include His-308, His-354, and Asp-409.

It belongs to the citrate synthase family. As to quaternary structure, homodimer.

The protein resides in the mitochondrion matrix. It catalyses the reaction oxaloacetate + acetyl-CoA + H2O = citrate + CoA + H(+). It functions in the pathway carbohydrate metabolism; tricarboxylic acid cycle; isocitrate from oxaloacetate: step 1/2. In Arabidopsis thaliana (Mouse-ear cress), this protein is Citrate synthase 4, mitochondrial (CSY4).